The sequence spans 91 residues: Small ribosomal subunit protein uS15 (91 aa).

This sequence belongs to the universal ribosomal protein uS15 family. In terms of assembly, part of the 30S ribosomal subunit. Forms a bridge to the 50S subunit in the 70S ribosome, contacting the 23S rRNA.

One of the primary rRNA binding proteins, it binds directly to 16S rRNA where it helps nucleate assembly of the platform of the 30S subunit by binding and bridging several RNA helices of the 16S rRNA. In terms of biological role, forms an intersubunit bridge (bridge B4) with the 23S rRNA of the 50S subunit in the ribosome. The polypeptide is Small ribosomal subunit protein uS15 (Rickettsia bellii (strain OSU 85-389)).